Reading from the N-terminus, the 806-residue chain is Disintegrin and metalloproteinase domain-containing protein 1b (806 aa).

A signal peptide spans 1–33; the sequence is MERLKLGKIPEHWCIRLVAMLLLAIIFLPSTFC. The interval 169-188 is disordered; sequence CSVTPKDSPGDTSHPPRSRK. One can recognise a Peptidase M12B domain in the interval 203-397; that stretch reads KYVEMFVVVN…HRGVCLLDEP (195 aa). The N-linked (GlcNAc...) asparagine glycan is linked to N224. 7 cysteine pairs are disulfide-bonded: C313-C392, C353-C376, C355-C361, C462-C482, C635-C647, C641-C653, and C655-C664. Residue H338 coordinates Zn(2+). E339 is a catalytic residue. Residues H342 and H348 each contribute to the Zn(2+) site. 2 N-linked (GlcNAc...) asparagine glycosylation sites follow: N375 and N476. Positions 406–490 constitute a Disintegrin domain; sequence AANCGNGVVE…ACPSDRKAQD (85 aa). The EGF-like domain occupies 631–665; the sequence is FSFPCSPSKQCNKHGVCNDLGNCHCSFGFAPPDCK. Positions 668–694 are disordered; that stretch reads GTGGSVDSGPAVNLSNDSSPGPNSTQS. N-linked (GlcNAc...) asparagine glycans are attached at residues N680, N683, and N690. Polar residues predominate over residues 680 to 694; that stretch reads NLSNDSSPGPNSTQS. A helical transmembrane segment spans residues 705-725; sequence LIVLAVILVLMILLIIICIIS. Topologically, residues 726-806 are cytoplasmic; the sequence is AYTKSETASE…KDEDEEEGEE (81 aa). Residues 735 to 806 form a disordered region; sequence EAGPSELEEL…KDEDEEEGEE (72 aa). Acidic residues predominate over residues 740 to 806; that stretch reads ELEELPEGEK…KDEDEEEGEE (67 aa).

As to quaternary structure, heterodimer with ADAM2/fertilin subunit beta. In terms of tissue distribution, testis.

The protein localises to the membrane. Its function is as follows. May play a role in spermatogenesis and sperm maturation. In Mus musculus (Mouse), this protein is Disintegrin and metalloproteinase domain-containing protein 1b (Adam1b).